Consider the following 129-residue polypeptide: Small ribosomal subunit protein uS13 (129 aa).

Residues 95–114 (NLPVRGQRTKTNARTRRGPR) show a composition bias toward basic residues. Positions 95-129 (NLPVRGQRTKTNARTRRGPRKTVAGRGQKRGATKK) are disordered.

The protein belongs to the universal ribosomal protein uS13 family. In terms of assembly, part of the 30S ribosomal subunit. Forms a loose heterodimer with protein S19. Forms two bridges to the 50S subunit in the 70S ribosome.

Functionally, located at the top of the head of the 30S subunit, it contacts several helices of the 16S rRNA. In the 70S ribosome it contacts the 23S rRNA (bridge B1a) and protein L5 of the 50S subunit (bridge B1b), connecting the 2 subunits; these bridges are implicated in subunit movement. Contacts the tRNAs in the A and P-sites. This chain is Small ribosomal subunit protein uS13, found in Dehalococcoides mccartyi (strain ATCC BAA-2100 / JCM 16839 / KCTC 5957 / BAV1).